The following is a 206-amino-acid chain: Ribonuclease HII (206 aa).

An RNase H type-2 domain is found at 1-206 (MKVLGIDEAG…SWATVQKKKQ (206 aa)). Residues Asp-7, Glu-8, and Asp-105 each coordinate a divalent metal cation.

It belongs to the RNase HII family. Mn(2+) serves as cofactor. Requires Mg(2+) as cofactor.

Its subcellular location is the cytoplasm. It carries out the reaction Endonucleolytic cleavage to 5'-phosphomonoester.. In terms of biological role, endonuclease that specifically degrades the RNA of RNA-DNA hybrids. In Methanothermobacter thermautotrophicus (strain ATCC 29096 / DSM 1053 / JCM 10044 / NBRC 100330 / Delta H) (Methanobacterium thermoautotrophicum), this protein is Ribonuclease HII (rnhB).